A 151-amino-acid chain; its full sequence is Superoxide dismutase [Cu-Zn] 2 (151 aa).

3 residues coordinate Cu cation: histidine 44, histidine 46, and histidine 61. An intrachain disulfide couples cysteine 55 to cysteine 144. Histidine 61, histidine 69, histidine 78, and aspartate 81 together coordinate Zn(2+). Position 118 (histidine 118) interacts with Cu cation.

The protein belongs to the Cu-Zn superoxide dismutase family. As to quaternary structure, homodimer. Cu cation is required as a cofactor. Zn(2+) serves as cofactor.

It is found in the cytoplasm. The enzyme catalyses 2 superoxide + 2 H(+) = H2O2 + O2. Its function is as follows. Destroys radicals which are normally produced within the cells and which are toxic to biological systems. The protein is Superoxide dismutase [Cu-Zn] 2 (SODCC.1) of Zea mays (Maize).